We begin with the raw amino-acid sequence, 642 residues long: Transmembrane 9 superfamily member 4 (642 aa).

The N-terminal stretch at 1 to 23 (MATAMDWLPWSLLLFSLMCETSA) is a signal peptide. Over 24–281 (FYVPGVAPIN…TMSDVQIHWF (258 aa)) the chain is Extracellular. Residues 282–302 (SIINSVVVVFFLSGILSMIII) traverse the membrane as a helical segment. Topologically, residues 303-346 (RTLRKDIANYNKEDDIEDTMEESGWKLVHGDVFRPPQYPMILSS) are cytoplasmic. Tyr-312 carries the phosphotyrosine modification. The helical transmembrane segment at 347 to 367 (LLGSGIQLFCMILIVIFVAML) threads the bilayer. Residues 368-376 (GMLSPSSRG) are Extracellular-facing. Residues 377 to 397 (ALMTTACFLFMFMGVFGGFSA) form a helical membrane-spanning segment. The Cytoplasmic segment spans residues 398-416 (GRLYRTLKGHRWKKGAFCT). Residues 417–437 (ATLYPGVVFGICFVLNCFIWG) traverse the membrane as a helical segment. Over 438–449 (KHSSGAVPFPTM) the chain is Extracellular. Residues 450–470 (VALLCMWFGISLPLVYLGYYF) traverse the membrane as a helical segment. Residues 471–501 (GFRKQPYDNPVRTNQIPRQIPEQRWYMNRFV) are Cytoplasmic-facing. Residues 502 to 522 (GILMAGILPFGAMFIELFFIF) traverse the membrane as a helical segment. Over 523–535 (SAIWENQFYYLFG) the chain is Extracellular. The chain crosses the membrane as a helical span at residues 536–556 (FLFLVFIILVVSCSQISIVMV). Topologically, residues 557–570 (YFQLCAEDYRWWWR) are cytoplasmic. A helical membrane pass occupies residues 571–591 (NFLVSGGSAFYVLVYAIFYFV). Over 592–598 (NKLDIVE) the chain is Extracellular. The helical transmembrane segment at 599–619 (FIPSLLYFGYTALMVLSFWLL) threads the bilayer. At 620–642 (TGTIGFYAAYMFVRKIYAAVKID) the chain is on the cytoplasmic side.

This sequence belongs to the nonaspanin (TM9SF) (TC 9.A.2) family. As to quaternary structure, interacts with ATP6V1H in colon cancer cells. As to expression, highly expressed in metastatic melanoma cells whereas it is undetectable in primary melanoma cells, healthy skin tissues and peripheral blood lymphocytes. Expressed in CD34(+) hematopoietic progenitor cells and during monocyte and granulocyte differentiation. Overexpressed in acute myeloid leukemia, in particular in those displaying granulocytic differentiation (at protein level).

Its subcellular location is the membrane. The protein resides in the golgi apparatus. The protein localises to the early endosome. Functionally, associates with proteins harboring glycine-rich transmembrane domains and ensures their efficient localization to the cell surface. Regulates the assembly and activity of V-ATPase in colon cancer cells via its interaction with V-type proton ATPase subunit H (ATP6V1H) and contributes to V-ATPase-mediated pH alterations in cancer cells which play an important role in drug resistance and invasiveness of colon cancer cells. Plays an important role in an atypical phagocytic activity of metastatic melanoma cells called cannibalism and is involved in the pH regulation of the intracellular vesicles in tumor cells. The protein is Transmembrane 9 superfamily member 4 (TM9SF4) of Homo sapiens (Human).